Here is a 785-residue protein sequence, read N- to C-terminus: Probable cationic amino acid transporter (785 aa).

A run of 15 helical transmembrane segments spans residues 58–78, 83–103, 119–141, 187–207, 216–236, 251–271, 291–311, 337–357, 360–380, 384–404, 407–427, 568–588, 596–616, 628–648, and 655–675; these read LVSL…SGLV, AGPG…LSGV, AYTY…NLIL, YPDI…ALGV, VLNV…LFFV, WSGV…FDII, ASLV…TLMV, IVAI…LFPM, VIYA…VSTY, PAVA…LVSL, LIEM…VCVL, CVVL…FGSG, WAVL…FIII, MAPC…YLML, and WIRF…YGMW. The disordered stretch occupies residues 715–785; sequence DQGPFQNWGK…VDDDLDDPLE (71 aa). Low complexity predominate over residues 727–740; sequence QQKQPQQEQSEPQS. Residues 775–785 are compositionally biased toward acidic residues; it reads VVDDDLDDPLE.

The protein belongs to the amino acid-polyamine-organocation (APC) superfamily.

It is found in the lysosome membrane. In terms of biological role, may be involved in arginine transport. This is Probable cationic amino acid transporter (slc7a14a) from Danio rerio (Zebrafish).